A 382-amino-acid polypeptide reads, in one-letter code: Succinyl-diaminopimelate desuccinylase (382 aa).

H71 contributes to the Zn(2+) binding site. D73 is a catalytic residue. Residue D105 participates in Zn(2+) binding. E139 serves as the catalytic Proton acceptor. Zn(2+)-binding residues include E140, E168, and H354.

Belongs to the peptidase M20A family. DapE subfamily. As to quaternary structure, homodimer. Requires Zn(2+) as cofactor. It depends on Co(2+) as a cofactor.

It carries out the reaction N-succinyl-(2S,6S)-2,6-diaminopimelate + H2O = (2S,6S)-2,6-diaminopimelate + succinate. Its pathway is amino-acid biosynthesis; L-lysine biosynthesis via DAP pathway; LL-2,6-diaminopimelate from (S)-tetrahydrodipicolinate (succinylase route): step 3/3. Functionally, catalyzes the hydrolysis of N-succinyl-L,L-diaminopimelic acid (SDAP), forming succinate and LL-2,6-diaminopimelate (DAP), an intermediate involved in the bacterial biosynthesis of lysine and meso-diaminopimelic acid, an essential component of bacterial cell walls. The protein is Succinyl-diaminopimelate desuccinylase of Stutzerimonas stutzeri (strain A1501) (Pseudomonas stutzeri).